Here is a 115-residue protein sequence, read N- to C-terminus: DNA-directed RNA polymerase II subunit RPB11-b2 (115 aa).

Belongs to the archaeal Rpo11/eukaryotic RPB11/RPC19 RNA polymerase subunit family. As to quaternary structure, component of the RNA polymerase II (Pol II) complex consisting of 12 subunits.

The protein localises to the nucleus. Functionally, DNA-dependent RNA polymerase catalyzes the transcription of DNA into RNA using the four ribonucleoside triphosphates as substrates. Component of RNA polymerase II which synthesizes mRNA precursors and many functional non-coding RNAs. Pol II is the central component of the basal RNA polymerase II transcription machinery. It is composed of mobile elements that move relative to each other. RPB11 is part of the core element with the central large cleft. This is DNA-directed RNA polymerase II subunit RPB11-b2 (POLR2J3) from Homo sapiens (Human).